Reading from the N-terminus, the 628-residue chain is Biosynthetic arginine decarboxylase (628 aa).

Residue lysine 99 is modified to N6-(pyridoxal phosphate)lysine. Valine 279–tyrosine 289 provides a ligand contact to substrate.

It belongs to the Orn/Lys/Arg decarboxylase class-II family. SpeA subfamily. Mg(2+) serves as cofactor. Requires pyridoxal 5'-phosphate as cofactor.

It carries out the reaction L-arginine + H(+) = agmatine + CO2. Catalyzes the biosynthesis of agmatine from arginine. The chain is Biosynthetic arginine decarboxylase from Xanthomonas axonopodis pv. citri (strain 306).